We begin with the raw amino-acid sequence, 156 residues long: Small ribosomal subunit protein uS7 (156 aa).

This sequence belongs to the universal ribosomal protein uS7 family. In terms of assembly, part of the 30S ribosomal subunit. Contacts proteins S9 and S11.

Its function is as follows. One of the primary rRNA binding proteins, it binds directly to 16S rRNA where it nucleates assembly of the head domain of the 30S subunit. Is located at the subunit interface close to the decoding center, probably blocks exit of the E-site tRNA. In Thermobifida fusca (strain YX), this protein is Small ribosomal subunit protein uS7.